We begin with the raw amino-acid sequence, 208 residues long: MASKCPKCDKTVYFAEKVSSLGKDWHKFCLKCERCNKTLTPGGHAEHDGKPFCHKPCYATLFGPKGVNIGGAGSYIYEKPPTEAPQVTGPIEVPVVRTEERKTSGPPKGPSKASSVTTFTGEPNMCPRCNKRVYFAEKVTSLGKDWHRPCLRCERCSKTLTPGGHAEHDGQPYCHKPCYGILFGPKGVNTGAVGSYIYDKDPEGTVQP.

The 53-residue stretch at 5–57 (CPKCDKTVYFAEKVSSLGKDWHKFCLKCERCNKTLTPGGHAEHDGKPFCHKPC) folds into the LIM zinc-binding 1 domain. An N6-acetyllysine modification is found at Lys23. Ser104 carries the phosphoserine modification. An LIM zinc-binding 2 domain is found at 126–178 (CPRCNKRVYFAEKVTSLGKDWHRPCLRCERCSKTLTPGGHAEHDGQPYCHKPC). Residues Lys138 and Lys144 each carry the N6-acetyllysine modification.

In terms of assembly, interacts with TGFB1I1. As to expression, expressed more abundantly in liver and kidney of females than that of males. Equally expressed in brain, lung and heart.

This chain is Cysteine-rich protein 2 (Crip2), found in Rattus norvegicus (Rat).